The sequence spans 254 residues: Putative hydro-lyase SACE_1553 (254 aa).

Belongs to the D-glutamate cyclase family.

This is Putative hydro-lyase SACE_1553 from Saccharopolyspora erythraea (strain ATCC 11635 / DSM 40517 / JCM 4748 / NBRC 13426 / NCIMB 8594 / NRRL 2338).